The following is a 296-amino-acid chain: 4-hydroxy-tetrahydrodipicolinate synthase (296 aa).

Position 49 (Thr-49) interacts with pyruvate. Residue Tyr-137 is the Proton donor/acceptor of the active site. The active-site Schiff-base intermediate with substrate is the Lys-166. Ile-208 is a pyruvate binding site.

It belongs to the DapA family. In terms of assembly, homotetramer; dimer of dimers.

Its subcellular location is the cytoplasm. The enzyme catalyses L-aspartate 4-semialdehyde + pyruvate = (2S,4S)-4-hydroxy-2,3,4,5-tetrahydrodipicolinate + H2O + H(+). It participates in amino-acid biosynthesis; L-lysine biosynthesis via DAP pathway; (S)-tetrahydrodipicolinate from L-aspartate: step 3/4. Catalyzes the condensation of (S)-aspartate-beta-semialdehyde [(S)-ASA] and pyruvate to 4-hydroxy-tetrahydrodipicolinate (HTPA). The protein is 4-hydroxy-tetrahydrodipicolinate synthase of Chlorobium chlorochromatii (strain CaD3).